We begin with the raw amino-acid sequence, 461 residues long: Photosystem II CP43 reaction center protein (461 aa).

Positions 1–2 (ME) are excised as a propeptide. Thr3 is subject to N-acetylthreonine. Residue Thr3 is modified to Phosphothreonine. Helical transmembrane passes span 57-81 (LFEV…PHIA), 122-143 (LIGP…KDKN), 166-188 (KAMY…RIIT), 243-263 (TPWP…LSYS), and 279-300 (WFNN…ASQA). Glu355 serves as a coordination point for [CaMn4O5] cluster. Residues 435–459 (RARAAAAGFEKGIDRVDEPVLSMRP) form a helical membrane-spanning segment.

The protein belongs to the PsbB/PsbC family. PsbC subfamily. PSII is composed of 1 copy each of membrane proteins PsbA, PsbB, PsbC, PsbD, PsbE, PsbF, PsbH, PsbI, PsbJ, PsbK, PsbL, PsbM, PsbT, PsbX, PsbY, PsbZ, Psb30/Ycf12, at least 3 peripheral proteins of the oxygen-evolving complex and a large number of cofactors. It forms dimeric complexes. Binds multiple chlorophylls and provides some of the ligands for the Ca-4Mn-5O cluster of the oxygen-evolving complex. It may also provide a ligand for a Cl- that is required for oxygen evolution. PSII binds additional chlorophylls, carotenoids and specific lipids. is required as a cofactor.

Its subcellular location is the plastid. The protein resides in the chloroplast thylakoid membrane. Functionally, one of the components of the core complex of photosystem II (PSII). It binds chlorophyll and helps catalyze the primary light-induced photochemical processes of PSII. PSII is a light-driven water:plastoquinone oxidoreductase, using light energy to abstract electrons from H(2)O, generating O(2) and a proton gradient subsequently used for ATP formation. This chain is Photosystem II CP43 reaction center protein, found in Chlamydomonas moewusii (Chlamydomonas eugametos).